The primary structure comprises 382 residues: LIM homeobox transcription factor 1-alpha (382 aa).

LIM zinc-binding domains are found at residues 33 to 92 (SVCE…LFAV) and 92 to 154 (VKCG…EREL). Disordered regions lie at residues 161 to 208 (AASD…QQRR) and 252 to 285 (KLAR…GMEG). Residues 195 to 254 (PKRPRTILTTQQRRAFKASFEVSSKPCRKVRETLAAETGLSVRVVQVWFQNQRAKMKKLA) constitute a DNA-binding region (homeobox). A compositionally biased stretch (low complexity) spans 256-269 (RQQQQQQDQQNTQR).

In terms of tissue distribution, isoform 1 is expressed in many tissues. Not found in heart, liver, spleen and testis. Relatively highly expressed in fetal brain. Isoform LMX1A-4AB is expressed in testis.

It localises to the nucleus. Its function is as follows. Acts as a transcriptional activator by binding to an A/T-rich sequence, the FLAT element, in the insulin gene promoter. Required for development of the roof plate and, in turn, for specification of dorsal cell fates in the CNS and developing vertebrae. This is LIM homeobox transcription factor 1-alpha (LMX1A) from Homo sapiens (Human).